Consider the following 194-residue polypeptide: Ras-like protein rasS (194 aa).

A GTP-binding site is contributed by 10 to 17 (GPGGVGKS). The Effector region signature appears at 32-40 (YDPTLEDSY). GTP is bound by residues 57–61 (DTAGQ) and 116–119 (NKCD). A disordered region spans residues 168–194 (RQSNQHSNSQEQNTDQPIKKKKSCNLL). Residues 169-180 (QSNQHSNSQEQN) are compositionally biased toward low complexity. Residue C191 is modified to Cysteine methyl ester. Residue C191 is the site of S-geranylgeranyl cysteine attachment. The propeptide at 192 to 194 (NLL) is removed in mature form.

Belongs to the small GTPase superfamily. Ras family.

The protein resides in the cell membrane. It carries out the reaction GTP + H2O = GDP + phosphate + H(+). Ras proteins bind GDP/GTP and possess intrinsic GTPase activity. In Dictyostelium discoideum (Social amoeba), this protein is Ras-like protein rasS (rasS).